The primary structure comprises 342 residues: MTNLTLALDAMGGDHGPQVTVPAALQALRLHPKLSLLLVGDETQISPYLSSAEIDVRSRITLVHTTEVVRMDDKPATALRHAKNSSMRLAIEQVRDGMADGCVSAGNTGALMAMAKVLLKMLPGVDRPALVSCLPAINGKPVYLLDLGANIQCDYDTLFQFAVMGSVLSEAVDKIARPKVALLNVGIEECKGNGDVQQAAQLLLHTPQLNYAGFIEGDEIYSGKVDVIVCDGFVGNITLKTSEGIARLLVHQLKQGLAKGFVVRILARLLAPRIQKVLNQMNPDHYNGASLLGLRAVVVKSHGNADEHAYIQAISLAYTEAKRRLPEMIKDRLESILLDINS.

It belongs to the PlsX family. As to quaternary structure, homodimer. Probably interacts with PlsY.

It is found in the cytoplasm. It catalyses the reaction a fatty acyl-[ACP] + phosphate = an acyl phosphate + holo-[ACP]. It functions in the pathway lipid metabolism; phospholipid metabolism. Catalyzes the reversible formation of acyl-phosphate (acyl-PO(4)) from acyl-[acyl-carrier-protein] (acyl-ACP). This enzyme utilizes acyl-ACP as fatty acyl donor, but not acyl-CoA. The sequence is that of Phosphate acyltransferase from Shewanella amazonensis (strain ATCC BAA-1098 / SB2B).